Here is a 119-residue protein sequence, read N- to C-terminus: Large ribosomal subunit protein bL19 (119 aa).

This sequence belongs to the bacterial ribosomal protein bL19 family.

In terms of biological role, this protein is located at the 30S-50S ribosomal subunit interface and may play a role in the structure and function of the aminoacyl-tRNA binding site. In Saccharopolyspora erythraea (strain ATCC 11635 / DSM 40517 / JCM 4748 / NBRC 13426 / NCIMB 8594 / NRRL 2338), this protein is Large ribosomal subunit protein bL19.